Consider the following 285-residue polypeptide: Pantothenate synthetase (285 aa).

Residue M30 to H37 coordinates ATP. Catalysis depends on H37, which acts as the Proton donor. (R)-pantoate is bound at residue Q61. Q61 contacts beta-alanine. G149 to D152 is an ATP binding site. Q155 is a binding site for (R)-pantoate. Residues I178 and L186–R189 each bind ATP.

Belongs to the pantothenate synthetase family. As to quaternary structure, homodimer.

The protein localises to the cytoplasm. It catalyses the reaction (R)-pantoate + beta-alanine + ATP = (R)-pantothenate + AMP + diphosphate + H(+). Its pathway is cofactor biosynthesis; (R)-pantothenate biosynthesis; (R)-pantothenate from (R)-pantoate and beta-alanine: step 1/1. Its function is as follows. Catalyzes the condensation of pantoate with beta-alanine in an ATP-dependent reaction via a pantoyl-adenylate intermediate. This chain is Pantothenate synthetase, found in Buchnera aphidicola subsp. Acyrthosiphon pisum (strain Tuc7).